Consider the following 184-residue polypeptide: Lipoprotein signal peptidase (184 aa).

Helical transmembrane passes span F23–F43, P88–F108, and T110–F130. Residues D142 and D157 contribute to the active site. Residues A156–F176 form a helical membrane-spanning segment.

Belongs to the peptidase A8 family.

It localises to the cell membrane. It catalyses the reaction Release of signal peptides from bacterial membrane prolipoproteins. Hydrolyzes -Xaa-Yaa-Zaa-|-(S,diacylglyceryl)Cys-, in which Xaa is hydrophobic (preferably Leu), and Yaa (Ala or Ser) and Zaa (Gly or Ala) have small, neutral side chains.. Its pathway is protein modification; lipoprotein biosynthesis (signal peptide cleavage). This protein specifically catalyzes the removal of signal peptides from prolipoproteins. The sequence is that of Lipoprotein signal peptidase from Mycoplasma pneumoniae (strain ATCC 29342 / M129 / Subtype 1) (Mycoplasmoides pneumoniae).